The primary structure comprises 339 residues: Ketol-acid reductoisomerase (NADP(+)) (339 aa).

A KARI N-terminal Rossmann domain is found at 1-182 (MRVYYDRDAD…GGGRAGIIET (182 aa)). Residues 24 to 27 (YGSQ), Arg-48, Ser-51, Ser-53, and 83 to 86 (DELQ) contribute to the NADP(+) site. His-108 is a catalytic residue. Residue Gly-134 participates in NADP(+) binding. The region spanning 183-328 (TFREECETDL…AKLRDMMPWI (146 aa)) is the KARI C-terminal knotted domain. Mg(2+)-binding residues include Asp-191, Glu-195, Glu-227, and Glu-231. A substrate-binding site is contributed by Ser-252.

It belongs to the ketol-acid reductoisomerase family. Mg(2+) serves as cofactor.

The catalysed reaction is (2R)-2,3-dihydroxy-3-methylbutanoate + NADP(+) = (2S)-2-acetolactate + NADPH + H(+). The enzyme catalyses (2R,3R)-2,3-dihydroxy-3-methylpentanoate + NADP(+) = (S)-2-ethyl-2-hydroxy-3-oxobutanoate + NADPH + H(+). It participates in amino-acid biosynthesis; L-isoleucine biosynthesis; L-isoleucine from 2-oxobutanoate: step 2/4. It functions in the pathway amino-acid biosynthesis; L-valine biosynthesis; L-valine from pyruvate: step 2/4. Involved in the biosynthesis of branched-chain amino acids (BCAA). Catalyzes an alkyl-migration followed by a ketol-acid reduction of (S)-2-acetolactate (S2AL) to yield (R)-2,3-dihydroxy-isovalerate. In the isomerase reaction, S2AL is rearranged via a Mg-dependent methyl migration to produce 3-hydroxy-3-methyl-2-ketobutyrate (HMKB). In the reductase reaction, this 2-ketoacid undergoes a metal-dependent reduction by NADPH to yield (R)-2,3-dihydroxy-isovalerate. In Nitrobacter hamburgensis (strain DSM 10229 / NCIMB 13809 / X14), this protein is Ketol-acid reductoisomerase (NADP(+)).